Here is a 238-residue protein sequence, read N- to C-terminus: Large ribosomal subunit protein uL1 (238 aa).

This sequence belongs to the universal ribosomal protein uL1 family. As to quaternary structure, part of the 50S ribosomal subunit.

Its function is as follows. Binds directly to 23S rRNA. The L1 stalk is quite mobile in the ribosome, and is involved in E site tRNA release. Functionally, protein L1 is also a translational repressor protein, it controls the translation of the L11 operon by binding to its mRNA. This chain is Large ribosomal subunit protein uL1, found in Beutenbergia cavernae (strain ATCC BAA-8 / DSM 12333 / CCUG 43141 / JCM 11478 / NBRC 16432 / NCIMB 13614 / HKI 0122).